The following is a 557-amino-acid chain: Formate--tetrahydrofolate ligase 2 (557 aa).

66–73 contributes to the ATP binding site; the sequence is TPAGEGKT.

The protein belongs to the formate--tetrahydrofolate ligase family.

The catalysed reaction is (6S)-5,6,7,8-tetrahydrofolate + formate + ATP = (6R)-10-formyltetrahydrofolate + ADP + phosphate. The protein operates within one-carbon metabolism; tetrahydrofolate interconversion. The polypeptide is Formate--tetrahydrofolate ligase 2 (Streptococcus pyogenes serotype M1).